The following is a 588-amino-acid chain: Aspartate--tRNA ligase (588 aa).

Glu172 lines the L-aspartate pocket. An aspartate region spans residues 196-199; the sequence is QLFK. Arg218 contacts L-aspartate. ATP-binding positions include 218–220 and Gln227; that span reads RDE. L-aspartate is bound at residue His449. An ATP-binding site is contributed by Glu483. Residue Arg490 participates in L-aspartate binding. Residue 535–538 coordinates ATP; that stretch reads GLDR.

This sequence belongs to the class-II aminoacyl-tRNA synthetase family. Type 1 subfamily. Homodimer.

It localises to the cytoplasm. The catalysed reaction is tRNA(Asp) + L-aspartate + ATP = L-aspartyl-tRNA(Asp) + AMP + diphosphate. Its function is as follows. Catalyzes the attachment of L-aspartate to tRNA(Asp) in a two-step reaction: L-aspartate is first activated by ATP to form Asp-AMP and then transferred to the acceptor end of tRNA(Asp). The protein is Aspartate--tRNA ligase of Haemophilus influenzae (strain PittGG).